The following is a 208-amino-acid chain: Putative 3-methyladenine DNA glycosylase (208 aa).

The protein belongs to the DNA glycosylase MPG family.

This chain is Putative 3-methyladenine DNA glycosylase, found in Nitrobacter winogradskyi (strain ATCC 25391 / DSM 10237 / CIP 104748 / NCIMB 11846 / Nb-255).